The sequence spans 635 residues: DNA mismatch repair protein MutL (635 aa).

Residues 352 to 380 (KAALQRGWVPPGAGRPGEGGGRAAPPPWR) are disordered.

Belongs to the DNA mismatch repair MutL/HexB family.

This protein is involved in the repair of mismatches in DNA. It is required for dam-dependent methyl-directed DNA mismatch repair. May act as a 'molecular matchmaker', a protein that promotes the formation of a stable complex between two or more DNA-binding proteins in an ATP-dependent manner without itself being part of a final effector complex. This chain is DNA mismatch repair protein MutL, found in Symbiobacterium thermophilum (strain DSM 24528 / JCM 14929 / IAM 14863 / T).